A 109-amino-acid polypeptide reads, in one-letter code: Iron-sulfur cluster assembly protein CyaY (109 aa).

It belongs to the frataxin family.

Involved in iron-sulfur (Fe-S) cluster assembly. May act as a regulator of Fe-S biogenesis. The sequence is that of Iron-sulfur cluster assembly protein CyaY from Shewanella sp. (strain ANA-3).